An 818-amino-acid polypeptide reads, in one-letter code: ATM interactor (818 aa).

A compositionally biased stretch (low complexity) spans M1–P34. Residues M1 to R62 are disordered. Residues I80 to H105 form a C2H2-type 1 zinc finger. The C2H2-type 2; degenerate zinc-finger motif lies at H161–E181. Over residues H210–S221 the composition is skewed to basic and acidic residues. Disordered regions lie at residues H210–P284 and D603–Q625. The tract at residues P219–Q437 is required for formation of RAD51 foci. Composition is skewed to polar residues over residues Y229–L243 and D603–N612.

As to quaternary structure, interacts via its C-terminus with ATM. Interacts with DYNLL; this interaction inhibits ATMIN transcriptional activity and hence may play a role in a feedback loop whereby DYNLL1 inhibits transactivation of its own promoter by ATMIN. ATMIN.

The protein resides in the nucleus. In terms of biological role, transcription factor. Plays a crucial role in cell survival and RAD51 foci formation in response to methylating DNA damage. Involved in regulating the activity of ATM in the absence of DNA damage. May play a role in stabilizing ATM. Binds to the DYNLL1 promoter and activates its transcription. The sequence is that of ATM interactor from Mus musculus (Mouse).